The primary structure comprises 40 residues: Photosystem II reaction center protein J (40 aa).

Residues 10 to 30 (LWIIGTVTGILVIGLIGIFFF) form a helical membrane-spanning segment.

Belongs to the PsbJ family. As to quaternary structure, PSII is composed of 1 copy each of membrane proteins PsbA, PsbB, PsbC, PsbD, PsbE, PsbF, PsbH, PsbI, PsbJ, PsbK, PsbL, PsbM, PsbT, PsbX, PsbY, PsbZ, Psb30/Ycf12, at least 3 peripheral proteins of the oxygen-evolving complex and a large number of cofactors. It forms dimeric complexes.

It is found in the plastid membrane. Its function is as follows. One of the components of the core complex of photosystem II (PSII). PSII is a light-driven water:plastoquinone oxidoreductase that uses light energy to abstract electrons from H(2)O, generating O(2) and a proton gradient subsequently used for ATP formation. It consists of a core antenna complex that captures photons, and an electron transfer chain that converts photonic excitation into a charge separation. The polypeptide is Photosystem II reaction center protein J (Cuscuta exaltata (Tall dodder)).